The chain runs to 790 residues: Protein SEY1 (790 aa).

Topologically, residues 1-692 (MELSEGELSH…KRSIVQHITQ (692 aa)) are cytoplasmic. Positions 55–284 (GNNYHIISVF…VNNELFKPEY (230 aa)) constitute a GB1/RHD3-type G domain. 65–72 (GSQSTGKS) contacts GTP. Residues 693–713 (IPYYIYLIILVLGWNEFMAII) traverse the membrane as a helical segment. The Lumenal segment spans residues 714–716 (RNP). The helical transmembrane segment at 717 to 737 (LFFSLSIVLGATVYVLYYLNL) threads the bilayer. The Cytoplasmic portion of the chain corresponds to 738–790 (LKPAMLVAQRTMDEVIIMAKTKLREVLIDDHEVTGRQLNKIAGGKENIELDDM).

Belongs to the TRAFAC class dynamin-like GTPase superfamily. GB1/RHD3 GTPase family. RHD3 subfamily.

Its subcellular location is the endoplasmic reticulum membrane. In terms of biological role, cooperates with the reticulon proteins and tubule-shaping DP1 family proteins to generate and maintain the structure of the tubular endoplasmic reticulum network. Has GTPase activity, which is required for its function in ER organization. This Candida dubliniensis (strain CD36 / ATCC MYA-646 / CBS 7987 / NCPF 3949 / NRRL Y-17841) (Yeast) protein is Protein SEY1.